A 427-amino-acid chain; its full sequence is C4-dicarboxylate TRAP transporter large permease protein DctM (427 aa).

A run of 13 helical transmembrane segments spans residues 2–22, 55–75, 91–111, 115–135, 138–158, 171–191, 216–236, 237–257, 274–294, 310–330, 335–355, 359–379, and 396–416; these read TILF…PIAV, TLLA…GGVA, GGLA…SGSS, VAAV…PQAF, GIVC…VMVV, FIAG…VIYI, ALWG…GAFT, PTEA…FVYR, LTIM…VLTT, LSPW…GNFM, IILI…IDPI, IIMV…LNLF, and ALPW…IPAV.

Belongs to the TRAP transporter large permease family. As to quaternary structure, the complex comprises the extracytoplasmic solute receptor protein DctP, and the two transmembrane proteins DctQ and DctM.

Its subcellular location is the cell inner membrane. Part of the tripartite ATP-independent periplasmic (TRAP) transport system DctPQM involved in C4-dicarboxylates uptake. This Pseudomonas aeruginosa (strain ATCC 15692 / DSM 22644 / CIP 104116 / JCM 14847 / LMG 12228 / 1C / PRS 101 / PAO1) protein is C4-dicarboxylate TRAP transporter large permease protein DctM.